We begin with the raw amino-acid sequence, 357 residues long: Meiotic driver wtf9 (357 aa).

The disordered stretch occupies residues methionine 1–serine 39. Positions serine 11–proline 29 are enriched in basic and acidic residues. The next 7 helical transmembrane spans lie at leucine 89 to proline 109, alanine 119 to phenylalanine 139, cysteine 149 to alanine 169, valine 198 to phenylalanine 218, cysteine 232 to leucine 252, phenylalanine 256 to leucine 276, and alanine 286 to tyrosine 306.

The protein belongs to the WTF family. In terms of assembly, homomer. Forms protein aggregates. The two isoforms can interact with each other and with themselves. High sequence similarity is required for their interaction.

It is found in the spore membrane. Its subcellular location is the vacuole membrane. It localises to the ascus epiplasm. The protein localises to the cytoplasm. The protein resides in the endoplasmic reticulum membrane. In terms of biological role, promotes unequal transmission of alleles from the parental zygote to progeny spores by acting as poison/antidote system where the poison and antidote proteins are produced from the same locus; the poison component is trans-acting and targets all spores within an ascus whereas the antidote component is spore-specific, leading to poisoning of all progeny that do not inherit the allele. Functionally, localizes isoform 2 to the vacuole thereby facilitating its degradation. Its function is as follows. Forms toxic aggregates that disrupt spore maturation. The sequence is that of Meiotic driver wtf9 from Schizosaccharomyces kambucha (Fission yeast).